The following is a 295-amino-acid chain: MNFFQAIFLGLVQALTEYLPVSSSAHVRIVGDLMLGGDPGAAFTAIIQIGTELAVLLYFRRDIWNILKSWCLCLAGKEGKDRASRFGAHNKDARLGWYIIIATIPILIAGVLFQHAIETTLRNLWITVAMLFIFGVILWIVDDRARQVKTLDDMNTKDAIWFGIGQMLALIPGVSRSGGTITFGRAMGYKREAAVRAAFLMAIPAVFGAGILEAVKAIKDVNADAMFPGWGATIAATVVAFVVGYIVIIGFLKFVSTYSYKAFAIYRIALAIIVAILLLCGVLSPLEGIPVSGNA.

A run of 6 helical transmembrane segments spans residues Pro-39–Phe-59, Trp-97–Ile-117, Leu-121–Val-141, Ala-198–Ile-218, Ala-232–Leu-252, and Phe-263–Leu-283.

It belongs to the UppP family.

It is found in the cell membrane. It carries out the reaction di-trans,octa-cis-undecaprenyl diphosphate + H2O = di-trans,octa-cis-undecaprenyl phosphate + phosphate + H(+). Its function is as follows. Catalyzes the dephosphorylation of undecaprenyl diphosphate (UPP). Confers resistance to bacitracin. The sequence is that of Undecaprenyl-diphosphatase from Bifidobacterium animalis subsp. lactis (strain AD011).